The sequence spans 374 residues: Fe(2+) transport protein 1 (374 aa).

The first 33 residues, 1-33 (MATPRTLVPILPPVAALLLLLVAASSIPILAAA), serve as a signal peptide directing secretion. Residues 34–62 (QPADACGGAPDQAAADGACHDVPRALRLK) lie on the Extracellular side of the membrane. A helical transmembrane segment spans residues 63 to 83 (LIAIPTILVSSVVGVCLPLLS). Topologically, residues 84–92 (RSVPALRPD) are cytoplasmic. Residues 93–113 (GGLFAVVKAFASGVILATGYM) traverse the membrane as a helical segment. Residues 114 to 137 (HVLPDAFNNLTSPCLPRKPWSEFP) are Extracellular-facing. A helical transmembrane segment spans residues 138 to 158 (FAAFVAMLAAVSTLMADSLML). Residues 159-219 (TYYNRSKPRP…ATQVQLRRNR (61 aa)) lie on the Cytoplasmic side of the membrane. The segment at 166 to 199 (PRPSSGGDVAAVADHGESPDQGHRHGHGHGHGHG) is disordered. Basic and acidic residues predominate over residues 179 to 188 (DHGESPDQGH). A helical transmembrane segment spans residues 220-240 (VVVQVLEIGIVVHSVVIGLGM). The Extracellular portion of the chain corresponds to 241–251 (GASQNVCTIRP). The helical transmembrane segment at 252–272 (LVAAMCFHQMFEGMGLGGCIL) threads the bilayer. Over 273–282 (QAEYGRRMRS) the chain is Cytoplasmic. A helical membrane pass occupies residues 283–303 (VLVFFFSTTTPFGIALGLALT). The Extracellular segment spans residues 304 to 313 (RVYRDNSPTA). A helical membrane pass occupies residues 314-334 (LIVVGLLNAASAGLLHYMALV). The Cytoplasmic portion of the chain corresponds to 335–353 (ELLAADFMGPKLQGNVRLQ). The chain crosses the membrane as a helical span at residues 354–374 (LAAFLAVLLGAGGMSVMAKWA).

Belongs to the ZIP transporter (TC 2.A.5) family. In terms of tissue distribution, expressed in companion cells in the upper region of the root.

The protein localises to the cell membrane. Its function is as follows. Iron transporter involved in the uptake of iron from the rhizosphere across the plasma membrane in the root epidermal layer. May also transport other divalent cations. In Oryza sativa subsp. japonica (Rice), this protein is Fe(2+) transport protein 1 (IRT1).